Here is a 347-residue protein sequence, read N- to C-terminus: uncharacterized protein (347 aa).

This is an uncharacterized protein from Mycoplasma genitalium (strain ATCC 33530 / DSM 19775 / NCTC 10195 / G37) (Mycoplasmoides genitalium).